A 190-amino-acid polypeptide reads, in one-letter code: Holliday junction branch migration complex subunit RuvA (190 aa).

Residues 1 to 63 are domain I; it reads MIRKINATIE…EWNTSLYIFK (63 aa). Residues 64 to 138 are domain II; that stretch reads DKIERDVFES…NSFSAYSTGA (75 aa). Residues 138–142 are flexible linker; sequence ADTQS. Positions 143–190 are domain III; that stretch reads YGNNNLKEAIEALETLGFQRYEIMKVIGQLDLEDLKTEEIIKECLTRL.

This sequence belongs to the RuvA family. In terms of assembly, homotetramer. Forms an RuvA(8)-RuvB(12)-Holliday junction (HJ) complex. HJ DNA is sandwiched between 2 RuvA tetramers; dsDNA enters through RuvA and exits via RuvB. An RuvB hexamer assembles on each DNA strand where it exits the tetramer. Each RuvB hexamer is contacted by two RuvA subunits (via domain III) on 2 adjacent RuvB subunits; this complex drives branch migration. In the full resolvosome a probable DNA-RuvA(4)-RuvB(12)-RuvC(2) complex forms which resolves the HJ.

It localises to the cytoplasm. Its function is as follows. The RuvA-RuvB-RuvC complex processes Holliday junction (HJ) DNA during genetic recombination and DNA repair, while the RuvA-RuvB complex plays an important role in the rescue of blocked DNA replication forks via replication fork reversal (RFR). RuvA specifically binds to HJ cruciform DNA, conferring on it an open structure. The RuvB hexamer acts as an ATP-dependent pump, pulling dsDNA into and through the RuvAB complex. HJ branch migration allows RuvC to scan DNA until it finds its consensus sequence, where it cleaves and resolves the cruciform DNA. This Petrotoga mobilis (strain DSM 10674 / SJ95) protein is Holliday junction branch migration complex subunit RuvA.